The primary structure comprises 122 residues: Small ribosomal subunit protein uS13 (122 aa).

The tract at residues 96-122 (LPVHGQRTKTNARTRKGPARTVAGKKK) is disordered.

It belongs to the universal ribosomal protein uS13 family. In terms of assembly, part of the 30S ribosomal subunit. Forms a loose heterodimer with protein S19. Forms two bridges to the 50S subunit in the 70S ribosome.

Its function is as follows. Located at the top of the head of the 30S subunit, it contacts several helices of the 16S rRNA. In the 70S ribosome it contacts the 23S rRNA (bridge B1a) and protein L5 of the 50S subunit (bridge B1b), connecting the 2 subunits; these bridges are implicated in subunit movement. Contacts the tRNAs in the A and P-sites. This is Small ribosomal subunit protein uS13 from Geotalea daltonii (strain DSM 22248 / JCM 15807 / FRC-32) (Geobacter daltonii).